A 45-amino-acid polypeptide reads, in one-letter code: Photosystem II reaction center protein K (45 aa).

The propeptide occupies Met-1–Ala-8. The chain crosses the membrane as a helical span at residues Leu-24–Phe-44.

This sequence belongs to the PsbK family. In terms of assembly, PSII is composed of 1 copy each of membrane proteins PsbA, PsbB, PsbC, PsbD, PsbE, PsbF, PsbH, PsbI, PsbJ, PsbK, PsbL, PsbM, PsbT, PsbX, PsbY, PsbZ, Psb30/Ycf12, peripheral proteins PsbO, CyanoQ (PsbQ), PsbU, PsbV and a large number of cofactors. It forms dimeric complexes.

It is found in the cellular thylakoid membrane. Functionally, one of the components of the core complex of photosystem II (PSII). PSII is a light-driven water:plastoquinone oxidoreductase that uses light energy to abstract electrons from H(2)O, generating O(2) and a proton gradient subsequently used for ATP formation. It consists of a core antenna complex that captures photons, and an electron transfer chain that converts photonic excitation into a charge separation. This Synechococcus elongatus (strain ATCC 33912 / PCC 7942 / FACHB-805) (Anacystis nidulans R2) protein is Photosystem II reaction center protein K.